A 64-amino-acid chain; its full sequence is Prokaryotic ubiquitin-like protein UBact (64 aa).

The interval 1-64 (MFNGEEVILF…SERYRQRTGE (64 aa)) is disordered. A compositionally biased stretch (basic and acidic residues) spans 22–64 (REIHKDAPAPKRPETKKTGDRLMDRMKKVDPNQSERYRQRTGE). Residue Glu64 forms an Isoglutamyl lysine isopeptide (Glu-Lys) (interchain with K-? in acceptor proteins) linkage.

This sequence belongs to the ubiquitin-like protein UBact family.

May function as a protein modifier covalently attached to lysine residues of substrate proteins. This may serve to target the modified proteins for degradation by proteasomes. The polypeptide is Prokaryotic ubiquitin-like protein UBact (Leptospirillum ferriphilum (strain ML-04)).